The sequence spans 198 residues: 7-methyl-GTP pyrophosphatase (198 aa).

The active-site Proton acceptor is Asp-69.

Belongs to the Maf family. YceF subfamily. Requires a divalent metal cation as cofactor.

The protein resides in the cytoplasm. It catalyses the reaction N(7)-methyl-GTP + H2O = N(7)-methyl-GMP + diphosphate + H(+). Functionally, nucleoside triphosphate pyrophosphatase that hydrolyzes 7-methyl-GTP (m(7)GTP). May have a dual role in cell division arrest and in preventing the incorporation of modified nucleotides into cellular nucleic acids. The chain is 7-methyl-GTP pyrophosphatase from Yersinia pestis bv. Antiqua (strain Antiqua).